A 758-amino-acid polypeptide reads, in one-letter code: Maturase-like protein 2 (758 aa).

The protein resides in the plastid. It localises to the chloroplast. This chain is Maturase-like protein 2 (mat2), found in Euglena gracilis.